The chain runs to 235 residues: Caffeoyl-CoA O-methyltransferase (235 aa).

Substrate is bound at residue Lys-8. Residues Val-52, Glu-74, 76–77, Ser-82, Asp-100, and Ala-129 contribute to the S-adenosyl-L-methionine site; that span reads GV. Position 151 (Asp-151) interacts with substrate. Position 151 (Asp-151) interacts with a divalent metal cation. Asp-153 lines the S-adenosyl-L-methionine pocket. A divalent metal cation is bound by residues Asp-177 and Asn-178.

This sequence belongs to the class I-like SAM-binding methyltransferase superfamily. Cation-dependent O-methyltransferase family. CCoAMT subfamily. Requires a divalent metal cation as cofactor.

It catalyses the reaction (E)-caffeoyl-CoA + S-adenosyl-L-methionine = (E)-feruloyl-CoA + S-adenosyl-L-homocysteine + H(+). It functions in the pathway aromatic compound metabolism; phenylpropanoid biosynthesis. In terms of biological role, methylates caffeoyl-CoA to feruloyl-CoA and 5-hydroxyferuloyl-CoA to sinapoyl-CoA. Plays a role in the synthesis of feruloylated polysaccharides. Involved in the reinforcement of the plant cell wall. Also involved in the responding to wounding or pathogen challenge by the increased formation of cell wall-bound ferulic acid polymers. In Populus kitakamiensis (Aspen), this protein is Caffeoyl-CoA O-methyltransferase.